The primary structure comprises 450 residues: Bifunctional protein GlmU (450 aa).

The tract at residues 1–228 is pyrophosphorylase; sequence MSTALVILAA…EAQTLGVNSR (228 aa). Residues 8–11, lysine 22, glutamine 75, 80–81, 103–105, glycine 140, glutamate 154, asparagine 169, and asparagine 226 contribute to the UDP-N-acetyl-alpha-D-glucosamine site; these read LAAG, GT, and YGD. Residue aspartate 105 coordinates Mg(2+). Position 226 (asparagine 226) interacts with Mg(2+). A linker region spans residues 229–249; the sequence is ADLAAADAIFQTRARAELLDL. The interval 250 to 450 is N-acetyltransferase; sequence GVTLMAPETV…AKKASKQKET (201 aa). Arginine 315 and lysine 333 together coordinate UDP-N-acetyl-alpha-D-glucosamine. The active-site Proton acceptor is histidine 345. Positions 348 and 359 each coordinate UDP-N-acetyl-alpha-D-glucosamine. Residues alanine 362, 368–369, serine 387, threonine 405, and arginine 422 contribute to the acetyl-CoA site; that span reads NY.

The protein in the N-terminal section; belongs to the N-acetylglucosamine-1-phosphate uridyltransferase family. This sequence in the C-terminal section; belongs to the transferase hexapeptide repeat family. As to quaternary structure, homotrimer. It depends on Mg(2+) as a cofactor.

It localises to the cytoplasm. It carries out the reaction alpha-D-glucosamine 1-phosphate + acetyl-CoA = N-acetyl-alpha-D-glucosamine 1-phosphate + CoA + H(+). It catalyses the reaction N-acetyl-alpha-D-glucosamine 1-phosphate + UTP + H(+) = UDP-N-acetyl-alpha-D-glucosamine + diphosphate. It functions in the pathway nucleotide-sugar biosynthesis; UDP-N-acetyl-alpha-D-glucosamine biosynthesis; N-acetyl-alpha-D-glucosamine 1-phosphate from alpha-D-glucosamine 6-phosphate (route II): step 2/2. It participates in nucleotide-sugar biosynthesis; UDP-N-acetyl-alpha-D-glucosamine biosynthesis; UDP-N-acetyl-alpha-D-glucosamine from N-acetyl-alpha-D-glucosamine 1-phosphate: step 1/1. The protein operates within bacterial outer membrane biogenesis; LPS lipid A biosynthesis. Catalyzes the last two sequential reactions in the de novo biosynthetic pathway for UDP-N-acetylglucosamine (UDP-GlcNAc). The C-terminal domain catalyzes the transfer of acetyl group from acetyl coenzyme A to glucosamine-1-phosphate (GlcN-1-P) to produce N-acetylglucosamine-1-phosphate (GlcNAc-1-P), which is converted into UDP-GlcNAc by the transfer of uridine 5-monophosphate (from uridine 5-triphosphate), a reaction catalyzed by the N-terminal domain. This is Bifunctional protein GlmU from Ruegeria pomeroyi (strain ATCC 700808 / DSM 15171 / DSS-3) (Silicibacter pomeroyi).